The sequence spans 507 residues: Glucose-6-phosphate isomerase (507 aa).

The active-site Proton donor is the Glu338. Residues His369 and Lys479 contribute to the active site.

This sequence belongs to the GPI family.

The protein resides in the cytoplasm. The catalysed reaction is alpha-D-glucose 6-phosphate = beta-D-fructose 6-phosphate. The protein operates within carbohydrate biosynthesis; gluconeogenesis. Its pathway is carbohydrate degradation; glycolysis; D-glyceraldehyde 3-phosphate and glycerone phosphate from D-glucose: step 2/4. Its function is as follows. Provides a gateway for fructose into the Entner-Doudouroff pathway. Catalyzes the reversible isomerization of glucose-6-phosphate to fructose-6-phosphate. The protein is Glucose-6-phosphate isomerase of Zymomonas mobilis subsp. mobilis (strain ATCC 31821 / ZM4 / CP4).